The primary structure comprises 662 residues: Protein-arginine deiminase type-1 (662 aa).

Positions 153, 155, 157, 164, 175, 178, 350, 352, 363, 370, 371, 374, 408, and 411 each coordinate Ca(2+). Catalysis depends on Cys644, which acts as the Nucleophile.

The protein belongs to the protein arginine deiminase family. In terms of assembly, monomer. Ca(2+) serves as cofactor. In terms of tissue distribution, expressed only in the epidermis and uterus.

It is found in the cytoplasm. The enzyme catalyses L-arginyl-[protein] + H2O = L-citrullyl-[protein] + NH4(+). Catalyzes the deimination of arginine residues of proteins. This is Protein-arginine deiminase type-1 (Padi1) from Mus musculus (Mouse).